The sequence spans 128 residues: Aspartate 1-decarboxylase (128 aa).

Ser25 functions as the Schiff-base intermediate with substrate; via pyruvic acid in the catalytic mechanism. Ser25 is modified (pyruvic acid (Ser)). Thr57 contributes to the substrate binding site. The active-site Proton donor is the Tyr58. 73–75 (GAA) serves as a coordination point for substrate.

It belongs to the PanD family. As to quaternary structure, heterooctamer of four alpha and four beta subunits. The cofactor is pyruvate. Is synthesized initially as an inactive proenzyme, which is activated by self-cleavage at a specific serine bond to produce a beta-subunit with a hydroxyl group at its C-terminus and an alpha-subunit with a pyruvoyl group at its N-terminus.

The protein resides in the cytoplasm. The enzyme catalyses L-aspartate + H(+) = beta-alanine + CO2. The protein operates within cofactor biosynthesis; (R)-pantothenate biosynthesis; beta-alanine from L-aspartate: step 1/1. Catalyzes the pyruvoyl-dependent decarboxylation of aspartate to produce beta-alanine. This is Aspartate 1-decarboxylase from Ruminiclostridium cellulolyticum (strain ATCC 35319 / DSM 5812 / JCM 6584 / H10) (Clostridium cellulolyticum).